Reading from the N-terminus, the 217-residue chain is Phosphatidylinositol phosphate synthase (217 aa).

2 helical membrane-spanning segments follow: residues 28–49 (LTPDVVTILGTTASVAGALTLF) and 55–74 (FAGACVVWFFVLFDMLDGAM). 31–34 (DVVT) contacts a CDP-1,2-diacyl-sn-glycerol. Mg(2+)-binding residues include Asp68 and Asp71. 3 residues coordinate a CDP-1,2-diacyl-sn-glycerol: Gly72, Arg76, and Thr82. Mg(2+) contacts are provided by Asp89 and Asp93. Residue Asp93 is the Proton acceptor of the active site. The next 4 membrane-spanning stretches (helical) occupy residues 95–112 (ISDGAVFCGLLWWIAFHM), 118–136 (VIATLICLVTSQVISYIKA), 156–173 (LIIVLTGAGVSDFPFVPW), and 179–200 (VGMWLLAVASVITCVQRLHTVW).

The protein belongs to the CDP-alcohol phosphatidyltransferase class-I family. In terms of assembly, homodimer. Mg(2+) is required as a cofactor.

It is found in the cell membrane. It carries out the reaction a CDP-1,2-diacyl-sn-glycerol + 1D-myo-inositol 3-phosphate = a 1,2-diacyl-sn-glycero-3-phospho-(1D-myo-inositol-3-phosphate) + CMP + H(+). The catalysed reaction is 1,2-di-(9Z-octadecenoyl)-sn-glycero-3-cytidine-5'-diphosphate + 1D-myo-inositol 3-phosphate = 1,2-di-(9Z-octadecenoyl)-sn-glycero-3-phospho-(1D-myo-inositol-3-phosphate) + CMP + H(+). It functions in the pathway phospholipid metabolism; phosphatidylinositol phosphate biosynthesis. With respect to regulation, competitively inhibited by several inositol 1-phosphate analogs, including the phosphonate analog 1-deoxy-1-phosphonomethyl-myo-inositol (Ino-C-P). In terms of biological role, catalyzes the conjugation of the 1'-hydroxyl group of D-myo-inositol-3-phosphate (also named L-myo-inositol-1-phosphate) with a lipid tail of cytidine diphosphate diacylglycerol (CDP-DAG), forming phosphatidylinositol phosphate (PIP) and CMP. PIP is a precursor of phosphatidylinositol (PI) which is an essential lipid for mycobacteria required for formation of their cell wall. The sequence is that of Phosphatidylinositol phosphate synthase from Mycobacterium bovis (strain BCG / Pasteur 1173P2).